The chain runs to 309 residues: tRNA pseudouridine synthase B (309 aa).

Residue D39 is the Nucleophile of the active site.

It belongs to the pseudouridine synthase TruB family. Type 1 subfamily.

The catalysed reaction is uridine(55) in tRNA = pseudouridine(55) in tRNA. Functionally, responsible for synthesis of pseudouridine from uracil-55 in the psi GC loop of transfer RNAs. The polypeptide is tRNA pseudouridine synthase B (Bacillus licheniformis (strain ATCC 14580 / DSM 13 / JCM 2505 / CCUG 7422 / NBRC 12200 / NCIMB 9375 / NCTC 10341 / NRRL NRS-1264 / Gibson 46)).